Consider the following 513-residue polypeptide: ATP synthase subunit alpha (513 aa).

G169–T176 contacts ATP.

Belongs to the ATPase alpha/beta chains family. As to quaternary structure, F-type ATPases have 2 components, CF(1) - the catalytic core - and CF(0) - the membrane proton channel. CF(1) has five subunits: alpha(3), beta(3), gamma(1), delta(1), epsilon(1). CF(0) has three main subunits: a(1), b(2) and c(9-12). The alpha and beta chains form an alternating ring which encloses part of the gamma chain. CF(1) is attached to CF(0) by a central stalk formed by the gamma and epsilon chains, while a peripheral stalk is formed by the delta and b chains.

The protein resides in the cell membrane. The catalysed reaction is ATP + H2O + 4 H(+)(in) = ADP + phosphate + 5 H(+)(out). Functionally, produces ATP from ADP in the presence of a proton gradient across the membrane. The alpha chain is a regulatory subunit. The protein is ATP synthase subunit alpha of Polynucleobacter asymbioticus (strain DSM 18221 / CIP 109841 / QLW-P1DMWA-1) (Polynucleobacter necessarius subsp. asymbioticus).